The primary structure comprises 229 residues: Transcriptional activator protein YukR (229 aa).

The HTH luxR-type domain occupies 157–222; that stretch reads DTSGKGILSP…QAIRLGVELE (66 aa). Positions 181–200 form a DNA-binding region, H-T-H motif; it reads YPEIALIAGITTRTVKHHMG.

Belongs to the autoinducer-regulated transcriptional regulatory protein family.

Its function is as follows. Probable transcriptional activator. Binds to an autoinducer molecule. This is Transcriptional activator protein YukR (yukR) from Yersinia ruckeri.